We begin with the raw amino-acid sequence, 894 residues long: ABC-transporter-regulating transcription factor (894 aa).

Positions 71-98 form a DNA-binding region, zn(2)-C6 fungal-type; that stretch reads CDMCRKKKIKCDGKMPKCSHCINYRTDC. The segment covering 159-174 has biased composition (polar residues); that stretch reads NTALNSLKSPTNKFNG. Residues 159–219 form a disordered region; it reads NTALNSLKSP…PKESETEVEG (61 aa). Over residues 175–189 the composition is skewed to low complexity; the sequence is SSATSQSQHTTASRH. Residues 199 to 210 show a composition bias toward polar residues; that stretch reads SPHTAATSPNSP. A helical membrane pass occupies residues 649–669; the sequence is CVWLILYYPVSALVTLFANIL. Residues 724–797 are disordered; it reads AEKESHSKKK…MSNPTRAFAP (74 aa). The span at 736–750 shows a compositional bias: basic and acidic residues; that stretch reads AAPDEPQDLRQKTPD. Composition is skewed to polar residues over residues 751–761 and 771–792; these read ENSVPSPSTKR and LFPS…SNPT.

It is found in the nucleus. It localises to the membrane. Transcription factor that regulates expression of the genes related to resistance to azole compounds. This is ABC-transporter-regulating transcription factor from Aspergillus oryzae (strain ATCC 42149 / RIB 40) (Yellow koji mold).